Here is an 859-residue protein sequence, read N- to C-terminus: DNA mismatch repair protein MutS (859 aa).

Glycine 618–serine 625 contacts ATP. Residues arginine 803 to proline 829 are disordered. Low complexity predominate over residues glutamine 808–asparagine 819.

The protein belongs to the DNA mismatch repair MutS family.

Its function is as follows. This protein is involved in the repair of mismatches in DNA. It is possible that it carries out the mismatch recognition step. This protein has a weak ATPase activity. This is DNA mismatch repair protein MutS from Shewanella pealeana (strain ATCC 700345 / ANG-SQ1).